A 214-amino-acid chain; its full sequence is Large ribosomal subunit protein uL16 (214 aa).

Arginine 32 is modified (citrulline). Residue lysine 175 forms a Glycyl lysine isopeptide (Lys-Gly) (interchain with G-Cter in SUMO2) linkage. Lysine 188 is covalently cross-linked (Glycyl lysine isopeptide (Lys-Gly) (interchain with G-Cter in ubiquitin)).

This sequence belongs to the universal ribosomal protein uL16 family. Component of the large ribosomal subunit. Mature ribosomes consist of a small (40S) and a large (60S) subunit. The 40S subunit contains about 33 different proteins and 1 molecule of RNA (18S). The 60S subunit contains about 49 different proteins and 3 molecules of RNA (28S, 5.8S and 5S). Citrullinated by PADI4. Post-translationally, ufmylated by UFL1.

The protein resides in the cytoplasm. Functionally, component of the large ribosomal subunit. Plays a role in the formation of actively translating ribosomes. May play a role in the embryonic brain development. The sequence is that of Large ribosomal subunit protein uL16 from Homo sapiens (Human).